The chain runs to 940 residues: UvrABC system protein A (940 aa).

31–38 serves as a coordination point for ATP; the sequence is GLSGSGKS. Residues 252 to 279 form a C4-type zinc finger; sequence CPHCGYSMQELEPRLFSFNNPAGACGTC. 2 consecutive ABC transporter domains span residues 309–586 and 606–936; these read WDQK…PDSL and RDKN…RFLK. Residue 639 to 646 participates in ATP binding; it reads GVSGSGKS. Residues 739 to 765 form a C4-type zinc finger; sequence CEACQGDGVIKVEMHFLPDVYVPCDVC.

It belongs to the ABC transporter superfamily. UvrA family. Forms a heterotetramer with UvrB during the search for lesions.

It is found in the cytoplasm. In terms of biological role, the UvrABC repair system catalyzes the recognition and processing of DNA lesions. UvrA is an ATPase and a DNA-binding protein. A damage recognition complex composed of 2 UvrA and 2 UvrB subunits scans DNA for abnormalities. When the presence of a lesion has been verified by UvrB, the UvrA molecules dissociate. The chain is UvrABC system protein A from Vibrio vulnificus (strain YJ016).